We begin with the raw amino-acid sequence, 174 residues long: Ribosome maturation factor RimM (174 aa).

Residues 96–169 form the PRC barrel domain; it reads KDTFFICDLI…KMVVDLPQGL (74 aa).

It belongs to the RimM family. As to quaternary structure, binds ribosomal protein uS19.

The protein localises to the cytoplasm. An accessory protein needed during the final step in the assembly of 30S ribosomal subunit, possibly for assembly of the head region. Essential for efficient processing of 16S rRNA. May be needed both before and after RbfA during the maturation of 16S rRNA. It has affinity for free ribosomal 30S subunits but not for 70S ribosomes. This is Ribosome maturation factor RimM from Acetivibrio thermocellus (strain ATCC 27405 / DSM 1237 / JCM 9322 / NBRC 103400 / NCIMB 10682 / NRRL B-4536 / VPI 7372) (Clostridium thermocellum).